The chain runs to 174 residues: 3-hydroxyanthranilate 3,4-dioxygenase (174 aa).

Residue Arg-47 participates in O2 binding. Residues His-51, Glu-57, and His-95 each contribute to the Fe cation site. Glu-57 serves as a coordination point for substrate. Arg-99 and Glu-110 together coordinate substrate. Positions 125, 128, 162, and 165 each coordinate Fe cation.

Belongs to the 3-HAO family. As to quaternary structure, homodimer. It depends on Fe(2+) as a cofactor.

The catalysed reaction is 3-hydroxyanthranilate + O2 = (2Z,4Z)-2-amino-3-carboxymuconate 6-semialdehyde. Its pathway is cofactor biosynthesis; NAD(+) biosynthesis; quinolinate from L-kynurenine: step 3/3. Its function is as follows. Catalyzes the oxidative ring opening of 3-hydroxyanthranilate to 2-amino-3-carboxymuconate semialdehyde, which spontaneously cyclizes to quinolinate. The polypeptide is 3-hydroxyanthranilate 3,4-dioxygenase (Burkholderia lata (strain ATCC 17760 / DSM 23089 / LMG 22485 / NCIMB 9086 / R18194 / 383)).